The following is a 117-amino-acid chain: UPF0251 protein DehaBAV1_0135 (117 aa).

This sequence belongs to the UPF0251 family.

The chain is UPF0251 protein DehaBAV1_0135 from Dehalococcoides mccartyi (strain ATCC BAA-2100 / JCM 16839 / KCTC 5957 / BAV1).